The primary structure comprises 614 residues: DNA double-strand break repair protein Mre11 (614 aa).

Mn(2+) contacts are provided by aspartate 12, histidine 14, aspartate 53, and asparagine 88. The Proton donor role is filled by histidine 89. Residues histidine 158, aspartate 189, and histidine 191 each contribute to the Mn(2+) site. Disordered stretches follow at residues 393-434 (ASPI…SPDI) and 487-614 (ALKK…GDYL). Residues 411–425 (PVSSADSVSAVSPES) show a composition bias toward low complexity. 3 stretches are compositionally biased toward basic and acidic residues: residues 487–502 (ALKK…REAP), 535–558 (VPEK…KETG), and 568–591 (GSEK…EKPV).

The protein belongs to the MRE11/RAD32 family. As to quaternary structure, homodimer. Forms a heterotetramer composed of two Mre11 subunits and two Rad50 subunits. Requires Mn(2+) as cofactor.

Nuclease activity is regulated by Rad50. Part of the Rad50/Mre11 complex, which is involved in the early steps of DNA double-strand break (DSB) repair. The complex may facilitate opening of the processed DNA ends to aid in the recruitment of HerA and NurA. Mre11 binds to DSB ends and has both double-stranded 3'-5' exonuclease activity and single-stranded endonuclease activity. The protein is DNA double-strand break repair protein Mre11 of Methanosarcina acetivorans (strain ATCC 35395 / DSM 2834 / JCM 12185 / C2A).